Reading from the N-terminus, the 173-residue chain is NADH-ubiquinone oxidoreductase chain 6 (173 aa).

Transmembrane regions (helical) follow at residues 1 to 21 (MTYF…AVAS), 27 to 47 (YGVV…VNLG), 48 to 68 (VSFV…VVFV), 87 to 107 (VMGY…LGGF), and 139 to 159 (YGVG…FVVL).

Belongs to the complex I subunit 6 family.

Its subcellular location is the mitochondrion membrane. The catalysed reaction is a ubiquinone + NADH + 5 H(+)(in) = a ubiquinol + NAD(+) + 4 H(+)(out). Core subunit of the mitochondrial membrane respiratory chain NADH dehydrogenase (Complex I) that is believed to belong to the minimal assembly required for catalysis. Complex I functions in the transfer of electrons from NADH to the respiratory chain. The immediate electron acceptor for the enzyme is believed to be ubiquinone. The protein is NADH-ubiquinone oxidoreductase chain 6 (MT-ND6) of Coturnix japonica (Japanese quail).